Here is a 534-residue protein sequence, read N- to C-terminus: Prolyl 4-hydroxylase subunit alpha-1 (534 aa).

Residues 1–17 form the signal peptide; sequence MIWVVLMMAILLPQSLA. N-linked (GlcNAc...) asparagine glycosylation is present at Asn-113. A TPR repeat occupies 205 to 238; that stretch reads VSVLDYLSYAVYQQGDLDKALLLTKKLLELDPEH. A glycan (N-linked (GlcNAc...) asparagine) is linked at Asn-259. The 109-residue stretch at 411-519 folds into the Fe2OG dioxygenase domain; it reads TAEELQVANY…KWVSNKWLHE (109 aa). Fe cation contacts are provided by His-429, Asp-431, and His-500. Residue Lys-510 coordinates 2-oxoglutarate.

This sequence belongs to the P4HA family. In terms of assembly, heterotetramer of two alpha-1 chains and two beta chains (P4HB)(the beta chain is the multi-functional PDI), where P4HB plays the role of a structural subunit; this tetramer catalyzes the formation of 4-hydroxyproline in collagen. The cofactor is Fe(2+). Requires L-ascorbate as cofactor. In terms of tissue distribution, expressed at least in brain, heart and lung.

The protein localises to the endoplasmic reticulum lumen. It catalyses the reaction L-prolyl-[collagen] + 2-oxoglutarate + O2 = trans-4-hydroxy-L-prolyl-[collagen] + succinate + CO2. Inhibited by poly(L-proline). Functionally, catalyzes the post-translational formation of 4-hydroxyproline in -Xaa-Pro-Gly- sequences in collagens and other proteins. The sequence is that of Prolyl 4-hydroxylase subunit alpha-1 (P4ha1) from Mus musculus (Mouse).